Here is a 1225-residue protein sequence, read N- to C-terminus: Cohesin subunit SA-3 (1225 aa).

The tract at residues 1–97 (MSSPLQRAVG…HSRKQSEPPA (97 aa)) is disordered. Over residues 15-26 (ALSASSSSSASL) the composition is skewed to low complexity. Residues 45–54 (LADEDTDFED) are compositionally biased toward acidic residues. Basic residues-rich tracts occupy residues 59–69 (NVKKRAAKRPP) and 76–90 (KHPK…RHSR). An SCD domain is found at 309–394 (FVHRYRDVLP…SRFKDRMVSM (86 aa)). Disordered regions lie at residues 546-567 (SEGH…KERK), 1063-1113 (AETS…STAV), and 1177-1225 (EEDE…IEDF). Residues 1078–1089 (VEGPAKPNREDV) are compositionally biased toward basic and acidic residues. The segment covering 1090–1099 (SSSQEESLQL) has biased composition (low complexity). Over residues 1177-1191 (EEDEEEELEIQDESN) the composition is skewed to acidic residues. Residues 1198–1209 (DMQASSYSSTSE) are compositionally biased toward polar residues. Ser1203 is subject to Phosphoserine. Residues 1216–1225 (DSTELDIEDF) show a composition bias toward acidic residues.

This sequence belongs to the SCC3 family. As to quaternary structure, component of the meiosis-specific cohesin complex, which also contains the SMC1 (SMC1A or SMC1B) and SMC3 heterodimer. Such complex likely contains RAD21, or the meiosis-specific related protein REC8. Interacts with CCDC79/TERB1; recruiting cohesin to telomeres to develop structural rigidity. In terms of processing, phosphorylated. Testis specific.

It is found in the nucleus. The protein resides in the chromosome. The protein localises to the centromere. Its function is as follows. Meiosis specific component of cohesin complex. The cohesin complex is required for the cohesion of sister chromatids after DNA replication. The cohesin complex apparently forms a large proteinaceous ring within which sister chromatids can be trapped. At anaphase, the complex is cleaved and dissociates from chromatin, allowing sister chromatids to segregate. The meiosis-specific cohesin complex probably replaces mitosis specific cohesin complex when it dissociates from chromatin during prophase I. The polypeptide is Cohesin subunit SA-3 (STAG3) (Homo sapiens (Human)).